A 968-amino-acid polypeptide reads, in one-letter code: Alanine--tRNA ligase, cytoplasmic (968 aa).

N-acetylmethionine is present on methionine 1. Phosphoserine is present on residues serine 3 and serine 8. Lysine 19 carries the N6-acetyllysine modification. ATP is bound by residues arginine 77, histidine 95, tryptophan 176, and 214-216 (IWN). L-alanine contacts are provided by asparagine 216 and aspartate 239. Glycine 243 provides a ligand contact to ATP. 2 positions are modified to phosphoserine: serine 399 and serine 555. The Zn(2+) site is built by histidine 605, histidine 609, cysteine 723, and histidine 727. The short motif at 750–763 (RRIVAVTGAEAQKA) is the Nuclear localization signal element. Lysine 876 is subject to N6-acetyllysine. At lysine 943 the chain carries N6,N6,N6-trimethyllysine; alternate. Lysine 943 is subject to N6,N6-dimethyllysine; alternate. N6-methyllysine; alternate is present on lysine 943.

This sequence belongs to the class-II aminoacyl-tRNA synthetase family. Monomer. Interacts with ANKRD16; the interaction is direct. Requires Zn(2+) as cofactor. In terms of processing, ISGylated. Post-translationally, methylation at 'Lys-943' by METTL21C.

Its subcellular location is the cytoplasm. The protein localises to the nucleus. The catalysed reaction is tRNA(Ala) + L-alanine + ATP = L-alanyl-tRNA(Ala) + AMP + diphosphate. The enzyme catalyses (S)-lactate + ATP + H(+) = (S)-lactoyl-AMP + diphosphate. It catalyses the reaction (S)-lactoyl-AMP + L-lysyl-[protein] = N(6)-[(S)-lactoyl]-L-lysyl-[protein] + AMP + 2 H(+). With respect to regulation, the protein lactyltransferase activity is inhibited by beta-alanine. Its function is as follows. Catalyzes the attachment of alanine to tRNA(Ala) in a two-step reaction: alanine is first activated by ATP to form Ala-AMP and then transferred to the acceptor end of tRNA(Ala). Also edits incorrectly charged tRNA(Ala) via its editing domain. In presence of high levels of lactate, also acts as a protein lactyltransferase that mediates lactylation of lysine residues in target proteins, such as TEAD1, TP53/p53 and YAP1. Protein lactylation takes place in a two-step reaction: lactate is first activated by ATP to form lactate-AMP and then transferred to lysine residues of target proteins. Acts as an inhibitor of TP53/p53 activity by catalyzing lactylation of TP53/p53. Acts as a positive regulator of the Hippo pathway by mediating lactylation of TEAD1 and YAP1. The sequence is that of Alanine--tRNA ligase, cytoplasmic (AARS1) from Pongo abelii (Sumatran orangutan).